Consider the following 180-residue polypeptide: Adenine phosphoribosyltransferase (180 aa).

The protein belongs to the purine/pyrimidine phosphoribosyltransferase family. Homodimer.

The protein resides in the cytoplasm. It catalyses the reaction AMP + diphosphate = 5-phospho-alpha-D-ribose 1-diphosphate + adenine. The protein operates within purine metabolism; AMP biosynthesis via salvage pathway; AMP from adenine: step 1/1. In terms of biological role, catalyzes a salvage reaction resulting in the formation of AMP, that is energically less costly than de novo synthesis. The protein is Adenine phosphoribosyltransferase of Mycoplasma genitalium (strain ATCC 33530 / DSM 19775 / NCTC 10195 / G37) (Mycoplasmoides genitalium).